The primary structure comprises 804 residues: RasGAP-activating-like protein 1 (804 aa).

C2 domains are found at residues 1–105 and 116–231; these read MAKS…DSWI and VQGE…KGWF. Ca(2+) is bound by residues D21, D27, D74, D76, D82, D149, D155, D202, D204, and D210. A Ras-GAP domain is found at 317-545; sequence GLAGRFLDYL…SRVRDFLDRL (229 aa). The region spanning 565–672 is the PH domain; the sequence is AIVREGYLLK…WLSALRKASA (108 aa). A Btk-type zinc finger spans residues 674 to 710; sequence NPNKLAACHPGAFRSARWTCCLQAERSAAGCSRTHSA. Zn(2+) contacts are provided by H682, C693, C694, and C704.

It depends on Ca(2+) as a cofactor. As to expression, highly expressed in thyroid and adrenal medulla, lower expression in brain, spinal cord and trachea. Expressed in melanocytes.

Functionally, probable inhibitory regulator of the Ras-cyclic AMP pathway. Plays a role in dendrite formation by melanocytes. The sequence is that of RasGAP-activating-like protein 1 from Homo sapiens (Human).